We begin with the raw amino-acid sequence, 436 residues long: Type II methyltransferase M.BsuRI (436 aa).

In terms of domain architecture, SAM-dependent MTase C5-type spans 59 to 409; that stretch reads INVLSLFSGC…SPIANWAINY (351 aa). The active site involves cysteine 157.

This sequence belongs to the class I-like SAM-binding methyltransferase superfamily. C5-methyltransferase family. As to quaternary structure, monomer.

The catalysed reaction is a 2'-deoxycytidine in DNA + S-adenosyl-L-methionine = a 5-methyl-2'-deoxycytidine in DNA + S-adenosyl-L-homocysteine + H(+). Functionally, a methylase, recognizes the double-stranded sequence 5'-GGCC-3', methylates C-3 on both strands, and protects the DNA from cleavage by the BsuRI endonuclease. This Bacillus subtilis protein is Type II methyltransferase M.BsuRI (hsdRM).